Reading from the N-terminus, the 338-residue chain is Phenylalanine--tRNA ligase alpha subunit (338 aa).

Glu-252 serves as a coordination point for Mg(2+).

The protein belongs to the class-II aminoacyl-tRNA synthetase family. Phe-tRNA synthetase alpha subunit type 1 subfamily. Tetramer of two alpha and two beta subunits. Mg(2+) serves as cofactor.

It localises to the cytoplasm. It carries out the reaction tRNA(Phe) + L-phenylalanine + ATP = L-phenylalanyl-tRNA(Phe) + AMP + diphosphate + H(+). The protein is Phenylalanine--tRNA ligase alpha subunit of Pseudomonas fluorescens (strain SBW25).